The sequence spans 122 residues: Large ribosomal subunit protein uL14c (122 aa).

The protein belongs to the universal ribosomal protein uL14 family. In terms of assembly, part of the 50S ribosomal subunit.

Its subcellular location is the plastid. Its function is as follows. Binds to 23S rRNA. This Cuscuta obtusiflora (Peruvian dodder) protein is Large ribosomal subunit protein uL14c.